The sequence spans 546 residues: E3 ubiquitin-protein ligase NEURL1B (546 aa).

One can recognise an NHR 1 domain in the interval 38 to 194 (APRFHAQAKG…ITDEVQLLES (157 aa)). The residue at position 199 (Thr-199) is a Phosphothreonine. Positions 270-424 (ELRFHATRGP…GVAGQLRLLG (155 aa)) constitute an NHR 2 domain. The disordered stretch occupies residues 429-490 (SSETMTPSGS…FSAPEPTGSR (62 aa)). Low complexity predominate over residues 457-471 (SSSASESSLVTAPSS). The RING-type zinc-finger motif lies at 494 to 534 (CTVCFDSEVDTVIYTCGHMCLCHGCGLRLRRQARACCPICR).

Interacts with DLL1 and DLL4. In terms of tissue distribution, expressed in the limb buds and dorsal root ganglia. Expressed in brain and kidney and at low levels in the heart.

Its subcellular location is the cytoplasm. It carries out the reaction S-ubiquitinyl-[E2 ubiquitin-conjugating enzyme]-L-cysteine + [acceptor protein]-L-lysine = [E2 ubiquitin-conjugating enzyme]-L-cysteine + N(6)-ubiquitinyl-[acceptor protein]-L-lysine.. It functions in the pathway protein modification; protein ubiquitination. Functionally, E3 ubiquitin-protein ligase involved in regulation of the Notch pathway through influencing the stability and activity of several Notch ligands. This is E3 ubiquitin-protein ligase NEURL1B (Neurl1b) from Mus musculus (Mouse).